The chain runs to 89 residues: Small ribosomal subunit protein uS15 (89 aa).

It belongs to the universal ribosomal protein uS15 family. Part of the 30S ribosomal subunit. Forms a bridge to the 50S subunit in the 70S ribosome, contacting the 23S rRNA.

In terms of biological role, one of the primary rRNA binding proteins, it binds directly to 16S rRNA where it helps nucleate assembly of the platform of the 30S subunit by binding and bridging several RNA helices of the 16S rRNA. Functionally, forms an intersubunit bridge (bridge B4) with the 23S rRNA of the 50S subunit in the ribosome. The polypeptide is Small ribosomal subunit protein uS15 (Streptococcus pneumoniae (strain P1031)).